A 150-amino-acid polypeptide reads, in one-letter code: Large ribosomal subunit protein bL9 (150 aa).

The protein belongs to the bacterial ribosomal protein bL9 family.

Functionally, binds to the 23S rRNA. This is Large ribosomal subunit protein bL9 from Streptococcus pyogenes serotype M3 (strain SSI-1).